Reading from the N-terminus, the 57-residue chain is Small ribosomal subunit protein eS27 (57 aa).

Residues cysteine 10, cysteine 13, cysteine 29, and cysteine 32 each coordinate Zn(2+). Residues 10-32 (CGDCENEQVVFGKASSVVSCAVC) form a C4-type zinc finger.

This sequence belongs to the eukaryotic ribosomal protein eS27 family. As to quaternary structure, part of the 30S ribosomal subunit. The cofactor is Zn(2+).

The chain is Small ribosomal subunit protein eS27 from Halorubrum lacusprofundi (strain ATCC 49239 / DSM 5036 / JCM 8891 / ACAM 34).